We begin with the raw amino-acid sequence, 425 residues long: Imidazolonepropionase (425 aa).

Positions 82 and 84 each coordinate Fe(3+). Zn(2+)-binding residues include His-82 and His-84. 3 residues coordinate 4-imidazolone-5-propanoate: Arg-91, Tyr-154, and His-187. Tyr-154 serves as a coordination point for N-formimidoyl-L-glutamate. His-253 is a Fe(3+) binding site. His-253 lines the Zn(2+) pocket. Glu-256 is a 4-imidazolone-5-propanoate binding site. Asp-328 contributes to the Fe(3+) binding site. Asp-328 serves as a coordination point for Zn(2+). Positions 330 and 332 each coordinate N-formimidoyl-L-glutamate. 4-imidazolone-5-propanoate is bound at residue Ser-333.

Belongs to the metallo-dependent hydrolases superfamily. HutI family. Zn(2+) serves as cofactor. The cofactor is Fe(3+).

Its subcellular location is the cytoplasm. It carries out the reaction 4-imidazolone-5-propanoate + H2O = N-formimidoyl-L-glutamate. It participates in amino-acid degradation; L-histidine degradation into L-glutamate; N-formimidoyl-L-glutamate from L-histidine: step 3/3. Catalyzes the hydrolytic cleavage of the carbon-nitrogen bond in imidazolone-5-propanoate to yield N-formimidoyl-L-glutamate. It is the third step in the universal histidine degradation pathway. In Symbiobacterium thermophilum (strain DSM 24528 / JCM 14929 / IAM 14863 / T), this protein is Imidazolonepropionase.